Here is a 489-residue protein sequence, read N- to C-terminus: Ecdysteroid UDP-glucosyltransferase (489 aa).

An N-terminal signal peptide occupies residues 1–17 (MVFLIIALTLLATGARA).

It belongs to the UDP-glycosyltransferase family.

Catalyzes the transfer of glucose from UDP-glucose to ecdysteroids which are insect molting hormones. Expression of egt interferes with normal insect development and block molting. In Orgyia pseudotsugata (Douglas-fir tussock moth), this protein is Ecdysteroid UDP-glucosyltransferase (EGT).